Consider the following 383-residue polypeptide: Chitinase-3-like protein 1 (383 aa).

A signal peptide spans 1-21 (MGLRVAQTGFVVLVLLQSCAA). One can recognise a GH18 domain in the interval 22–383 (YKLICYYTSW…NAIKDVLAGV (362 aa)). Residues cysteine 26 and cysteine 51 are joined by a disulfide bond. The N-linked (GlcNAc...) asparagine glycan is linked to asparagine 60. Chitin is bound by residues 70-71 (EW), 97-100 (GGWN), tyrosine 141, 204-207 (LTYD), and lysine 263. Cysteine 300 and cysteine 364 are joined by a disulfide. Residues 324–338 (QWVAYDDQESVKNKA) are important for AKT1 activation and IL8 production. Tryptophan 352 contributes to the chitin binding site.

This sequence belongs to the glycosyl hydrolase 18 family. Monomer. As to expression, detected in mammary gland.

It localises to the secreted. The protein localises to the extracellular space. The protein resides in the cytoplasm. Its subcellular location is the perinuclear region. It is found in the endoplasmic reticulum. Functionally, carbohydrate-binding lectin with a preference for chitin. Has no chitinase activity. May play a role in tissue remodeling and in the capacity of cells to respond to and cope with changes in their environment. Plays a role in T-helper cell type 2 (Th2) inflammatory response and IL-13-induced inflammation, regulating allergen sensitization, inflammatory cell apoptosis, dendritic cell accumulation and M2 macrophage differentiation. Facilitates invasion of pathogenic enteric bacteria into colonic mucosa and lymphoid organs. Mediates activation of AKT1 signaling pathway and subsequent IL8 production in colonic epithelial cells. Regulates antibacterial responses in lung by contributing to macrophage bacterial killing, controlling bacterial dissemination and augmenting host tolerance. Also regulates hyperoxia-induced injury, inflammation and epithelial apoptosis in lung. The chain is Chitinase-3-like protein 1 (CHI3L1) from Bubalus bubalis (Domestic water buffalo).